The primary structure comprises 513 residues: GMP synthase [glutamine-hydrolyzing] (513 aa).

Residues 5-195 enclose the Glutamine amidotransferase type-1 domain; the sequence is LVLVIDFGGQ…VYNICGCTGD (191 aa). Cys82 acts as the Nucleophile in catalysis. Active-site residues include His169 and Glu171. The GMPS ATP-PPase domain maps to 196-388; the sequence is WKMDSFVEKT…LGIPEKLVFR (193 aa). An ATP-binding site is contributed by 223 to 229; sequence SGGVDSS.

In terms of assembly, homodimer.

The enzyme catalyses XMP + L-glutamine + ATP + H2O = GMP + L-glutamate + AMP + diphosphate + 2 H(+). The protein operates within purine metabolism; GMP biosynthesis; GMP from XMP (L-Gln route): step 1/1. Catalyzes the synthesis of GMP from XMP. The sequence is that of GMP synthase [glutamine-hydrolyzing] from Clostridium botulinum (strain Eklund 17B / Type B).